Here is a 289-residue protein sequence, read N- to C-terminus: Glycine--tRNA ligase alpha subunit (289 aa).

It belongs to the class-II aminoacyl-tRNA synthetase family. As to quaternary structure, tetramer of two alpha and two beta subunits.

It localises to the cytoplasm. The enzyme catalyses tRNA(Gly) + glycine + ATP = glycyl-tRNA(Gly) + AMP + diphosphate. The polypeptide is Glycine--tRNA ligase alpha subunit (Rickettsia akari (strain Hartford)).